The following is an 852-amino-acid chain: Probable nitrite reductase-hydroxylamine oxidoreductase fusion protein (852 aa).

A signal peptide spans 1 to 27 (MLNKSAALVPVVLAFLFLFLCFQCLYA). Residues 28-327 (DIRCLTGKDG…DEGRKTLSAP (300 aa)) form a nitrite reductase domain region. Plastocyanin-like domains lie at 72–169 (VPGP…IVEP) and 217–307 (GETW…VEEG). The Cu cation site is built by His102 and His145. Residues 328–827 (GQDRQPPTLE…ISWWWGTAQG (500 aa)) form a hydroxylamine oxidoreductase domain region. Residues Cys406, Cys409, His410, His426, Cys463, Cys466, His467, His471, Cys483, Cys486, His487, His505, His537, Cys543, Cys546, His547, His550, Cys563, Cys566, His567, Cys614, Cys617, His618, Cys686, Cys689, His690, and His813 each contribute to the heme site.

In the N-terminal section; belongs to the multicopper oxidase family. Requires Cu cation as cofactor. The cofactor is heme.

It localises to the encapsulin nanocompartment. It catalyses the reaction hydroxylamine + 4 Fe(III)-[cytochrome c] + H2O = 4 Fe(II)-[cytochrome c] + nitrite + 5 H(+). It carries out the reaction nitric oxide + Fe(III)-[cytochrome c] + H2O = Fe(II)-[cytochrome c] + nitrite + 2 H(+). Functionally, a nitrite reductase-hydroxylamine oxidoreductase protein that probably functions in the type 1 encapsulin nanocompartment. Probably involved in reductive catalysis. Targeted to the encapsulin nanocompartment by association with the diheme domain of the encapsulin shell protein (AC Q1Q6L7). Catalyzes the reduction of nitrite to nitric oxide (NO). Catalyzes the oxidation of hydroxylamine to nitrite. The sequence is that of Probable nitrite reductase-hydroxylamine oxidoreductase fusion protein from Kuenenia stuttgartiensis.